A 400-amino-acid chain; its full sequence is Subtilisin-like protease 7 (400 aa).

An N-terminal signal peptide occupies residues 1 to 20 (MGFITKAIPLALAAASVING). The propeptide occupies 21–119 (AEILETRAGV…IERDARVQIN (99 aa)). The Inhibitor I9 domain occupies 36–118 (KYIVVMNDGM…YIERDARVQI (83 aa)). Residues 129–400 (SWGLARVGSK…GKLINNGSGK (272 aa)) enclose the Peptidase S8 domain. Active-site charge relay system residues include D161 and H192. N252 carries an N-linked (GlcNAc...) asparagine glycan. Catalysis depends on S346, which acts as the Charge relay system. An N-linked (GlcNAc...) asparagine glycan is attached at N396.

The protein belongs to the peptidase S8 family.

Its subcellular location is the secreted. Secreted subtilisin-like serine protease with keratinolytic activity that contributes to pathogenicity. The chain is Subtilisin-like protease 7 (SUB7) from Arthroderma gypseum (strain ATCC MYA-4604 / CBS 118893) (Microsporum gypseum).